Reading from the N-terminus, the 445-residue chain is Probable histidine--tRNA ligase, cytoplasmic (445 aa).

Belongs to the class-II aminoacyl-tRNA synthetase family.

It is found in the cytoplasm. The catalysed reaction is tRNA(His) + L-histidine + ATP = L-histidyl-tRNA(His) + AMP + diphosphate + H(+). The polypeptide is Probable histidine--tRNA ligase, cytoplasmic (Antonospora locustae (Microsporidian parasite)).